Consider the following 694-residue polypeptide: LMBR1 domain-containing protein 2 homolog (694 aa).

Residues 1–3 (MAY) lie on the Extracellular side of the membrane. A helical membrane pass occupies residues 4 to 26 (LLSFGIVAALFLASISLYRYGNI). The Cytoplasmic segment spans residues 27–30 (PRQH). A helical transmembrane segment spans residues 31 to 51 (ILVTLSVLTAWCFSFLIVFTI). Residues 52–106 (PLDVTSTLYRQCVEEHRPTPAPNVTNTSSATVGPPPQCQEPWGMVPASVFPNLWR) lie on the Extracellular side of the membrane. Residues N74 and N77 are each glycosylated (N-linked (GlcNAc...) asparagine). A helical transmembrane segment spans residues 107–127 (IIYWSSQFLTWLIMPLMQSYL). Over 128–144 (KAGDFTVKGKLKSALIE) the chain is Cytoplasmic. Residues 145–165 (NAIYYGSYLFICGVLLIYIAV) form a helical membrane-spanning segment. Residues 166 to 181 (KGESLDWQKLKAIASS) are Extracellular-facing. A helical transmembrane segment spans residues 182–202 (ASNTWGLFLLILLLGYALVEV). Residues 203 to 381 (PRSLWNNAKP…ECLLKAPFLK (179 aa)) lie on the Cytoplasmic side of the membrane. A coiled-coil region spans residues 222–249 (KAAKLSTEKAEAEEHVDDILESLQGLSR). The helical transmembrane segment at 382–402 (TMCVLTATMSAMVVWSELTFF) threads the bilayer. Residues 403–426 (SRHPVLSIFANVIYVAKESYDFFT) are Extracellular-facing. The chain crosses the membrane as a helical span at residues 427-447 (IEVFSMVVLCYFFYCTYSTIL). Topologically, residues 448–467 (RIRFLNLYYLAPHHQTNEHS) are cytoplasmic. The chain crosses the membrane as a helical span at residues 468–488 (LIFSGMLLCRLTPPMCLNFLG). Topologically, residues 489–514 (LIHMDTHIIPNRIMETVYTQIMGHMD) are extracellular. Residues 515–535 (VIGIISNGFNIYFPMCMLAFC) traverse the membrane as a helical segment. Over 536 to 694 (LATWFSLGSR…PPPRGLFDDV (159 aa)) the chain is Cytoplasmic. A coiled-coil region spans residues 564-592 (ELVQEGKDLIAREKRRRQRAEEAMARRRD). Residues 673-694 (DYEAETDGRIVGPPPRGLFDDV) are disordered.

This sequence belongs to the LIMR family.

It localises to the membrane. This chain is LMBR1 domain-containing protein 2 homolog, found in Drosophila melanogaster (Fruit fly).